We begin with the raw amino-acid sequence, 940 residues long: Glutamate receptor 2.9 (940 aa).

The first 23 residues, Met1 to Gly23, serve as a signal peptide directing secretion. Residues Gln24–Ser566 are Extracellular-facing. N-linked (GlcNAc...) asparagine glycosylation is found at Asn25, Asn39, Asn115, Asn338, Asn345, and Asn528. The chain crosses the membrane as a helical span at residues Leu567–Phe587. At Glu588 to Arg596 the chain is on the cytoplasmic side. A helical membrane pass occupies residues Gly597–Ala617. Residues His618–Arg628 lie on the Cytoplasmic side of the membrane. Residues Phe629–Leu649 form a helical membrane-spanning segment. Over Thr650–Gly811 the chain is Extracellular. Asn771, Asn776, and Asn805 each carry an N-linked (GlcNAc...) asparagine glycan. Residues Leu812–Leu832 traverse the membrane as a helical segment. Residues Tyr833–Gln940 are Cytoplasmic-facing. Disordered regions lie at residues Ile876–Ser900 and Pro914–Gln940.

The protein belongs to the glutamate-gated ion channel (TC 1.A.10.1) family. As to quaternary structure, may form heteromers. In terms of tissue distribution, expressed predominantly in roots.

It localises to the membrane. Glutamate-gated receptor that probably acts as a non-selective cation channel. May be involved in light-signal transduction and calcium homeostasis via the regulation of calcium influx into cells. The polypeptide is Glutamate receptor 2.9 (GLR2.9) (Arabidopsis thaliana (Mouse-ear cress)).